The sequence spans 249 residues: Pyridoxine 5'-phosphate synthase (249 aa).

Position 7 (asparagine 7) interacts with 3-amino-2-oxopropyl phosphate. 1-deoxy-D-xylulose 5-phosphate is bound at residue 9–10 (DH). 3-amino-2-oxopropyl phosphate is bound at residue arginine 18. The active-site Proton acceptor is the histidine 43. The 1-deoxy-D-xylulose 5-phosphate site is built by arginine 45 and histidine 50. Residue glutamate 70 is the Proton acceptor of the active site. Threonine 100 is a 1-deoxy-D-xylulose 5-phosphate binding site. Histidine 198 serves as the catalytic Proton donor. Residues alanine 199 and 220-221 (GH) each bind 3-amino-2-oxopropyl phosphate.

It belongs to the PNP synthase family. In terms of assembly, homooctamer; tetramer of dimers.

Its subcellular location is the cytoplasm. It catalyses the reaction 3-amino-2-oxopropyl phosphate + 1-deoxy-D-xylulose 5-phosphate = pyridoxine 5'-phosphate + phosphate + 2 H2O + H(+). The protein operates within cofactor biosynthesis; pyridoxine 5'-phosphate biosynthesis; pyridoxine 5'-phosphate from D-erythrose 4-phosphate: step 5/5. Functionally, catalyzes the complicated ring closure reaction between the two acyclic compounds 1-deoxy-D-xylulose-5-phosphate (DXP) and 3-amino-2-oxopropyl phosphate (1-amino-acetone-3-phosphate or AAP) to form pyridoxine 5'-phosphate (PNP) and inorganic phosphate. This chain is Pyridoxine 5'-phosphate synthase, found in Azoarcus sp. (strain BH72).